The primary structure comprises 1664 residues: Peroxisome proliferator-activated receptor gamma coactivator-related protein 1 (1664 aa).

7 disordered regions span residues 1–44 (MAAR…GTLG), 167–255 (LLTL…VASF), 436–555 (PVVP…EGPL), 681–701 (VDPVLVKSRPTDPRRGAVSSA), 735–793 (IESG…ADIP), 818–873 (CLVP…PTPP), and 1045–1068 (HGAPQTEPTKVEVKPVPASPHPKH). The span at 12-22 (APPPSGGPGPD) shows a compositional bias: pro residues. The span at 23–32 (PGGGARGSGW) shows a compositional bias: gly residues. The span at 201-224 (SLPDPSWDFSPPSFLETSSPKLPS) shows a compositional bias: low complexity. Ser237 carries the post-translational modification Phosphoserine. The segment at 433–467 (VVEPVVPKEPQNPPANAAPGSQRARKGRKKKSKEQ) is necessary for interaction with CREB1 and NRF1 and for transcriptional coactivation. The segment covering 455-464 (RARKGRKKKS) has biased composition (basic residues). Polar residues predominate over residues 482–499 (SSRGQSTVGTEVTSQVDN). Over residues 522–531 (RAWARAWAAA) the composition is skewed to low complexity. Over residues 533-549 (ENSSPKNLERSAGQSSP) the composition is skewed to polar residues. 2 positions are modified to phosphoserine: Ser536 and Ser548. Residues 823–836 (GPSPASPSPEPPVS) are compositionally biased toward pro residues. Low complexity predominate over residues 862–873 (VQSVSPAVPTPP). Ser1076 is subject to Phosphoserine. 3 disordered regions span residues 1093–1130 (EEPASERLKPETQETRPREKPPLPATKAVPTPRQSTVP), 1182–1209 (SEAKKECPPPAPADSLAVGNSGGVDIPQ), and 1334–1528 (VLSL…DHYQ). The span at 1096-1113 (ASERLKPETQETRPREKP) shows a compositional bias: basic and acidic residues. Residues 1365-1383 (PSAPCLAPSSLLSPEASPC) show a composition bias toward low complexity. Residues 1379-1450 (EASPCRNDMN…SSSSSSSSSS (72 aa)) form a necessary for interaction with CREB1 and NRF1 region. The segment covering 1400-1409 (RSMRCYRKAC) has biased composition (basic residues). Phosphoserine is present on residues Ser1411 and Ser1413. 2 stretches are compositionally biased toward low complexity: residues 1427-1459 (SRSVSSGSNRTSEASSSSSSSSSSSRSRSRSLS) and 1468-1500 (SSCSSSGRSRRCSSSSSSSSSSSSSSSSSSSSR). Residues 1501-1519 (SRSRSPSPRRRSDRRRRYS) show a composition bias toward basic residues. Residues 1543–1619 (RVVFIGKIPG…QPFDLCFGGR (77 aa)) enclose the RRM domain.

Interacts with CREB1 and NRF1. As to expression, strongly expressed in heart and skeletal muscle, moderately in lung, placenta, intestine, liver, kidney, spleen, thymus, colon and brain. Also expressed in several oncocytic thyroid tumors.

It localises to the nucleus. Functionally, acts as a coactivator during transcriptional activation of nuclear genes related to mitochondrial biogenesis and cell growth. Involved in the transcription coactivation of CREB and NRF1 target genes. This is Peroxisome proliferator-activated receptor gamma coactivator-related protein 1 (PPRC1) from Homo sapiens (Human).